The chain runs to 566 residues: Oxygen-dependent choline dehydrogenase (566 aa).

7–36 (DYIICGAGSAGNVLATRLTEDPDVTVLLLE) contributes to the FAD binding site. The interval 180–202 (NGYQQEGFGPMDRTVTPKGRRAS) is disordered. H474 serves as the catalytic Proton acceptor.

Belongs to the GMC oxidoreductase family. Requires FAD as cofactor.

It catalyses the reaction choline + A = betaine aldehyde + AH2. The enzyme catalyses betaine aldehyde + NAD(+) + H2O = glycine betaine + NADH + 2 H(+). Its pathway is amine and polyamine biosynthesis; betaine biosynthesis via choline pathway; betaine aldehyde from choline (cytochrome c reductase route): step 1/1. In terms of biological role, involved in the biosynthesis of the osmoprotectant glycine betaine. Catalyzes the oxidation of choline to betaine aldehyde and betaine aldehyde to glycine betaine at the same rate. This Burkholderia lata (strain ATCC 17760 / DSM 23089 / LMG 22485 / NCIMB 9086 / R18194 / 383) protein is Oxygen-dependent choline dehydrogenase.